Here is a 263-residue protein sequence, read N- to C-terminus: Hydroxyethylthiazole kinase (263 aa).

Met41 lines the substrate pocket. 2 residues coordinate ATP: Lys117 and Ser163. Position 190 (Gly190) interacts with substrate.

This sequence belongs to the Thz kinase family. Mg(2+) is required as a cofactor.

The catalysed reaction is 5-(2-hydroxyethyl)-4-methylthiazole + ATP = 4-methyl-5-(2-phosphooxyethyl)-thiazole + ADP + H(+). Its pathway is cofactor biosynthesis; thiamine diphosphate biosynthesis; 4-methyl-5-(2-phosphoethyl)-thiazole from 5-(2-hydroxyethyl)-4-methylthiazole: step 1/1. Catalyzes the phosphorylation of the hydroxyl group of 4-methyl-5-beta-hydroxyethylthiazole (THZ). The chain is Hydroxyethylthiazole kinase from Thermoanaerobacter sp. (strain X514).